The following is a 69-amino-acid chain: DNA gyrase inhibitor YacG (69 aa).

Residues C7, C10, C26, and C30 each contribute to the Zn(2+) site.

Belongs to the DNA gyrase inhibitor YacG family. As to quaternary structure, interacts with GyrB. The cofactor is Zn(2+).

Its function is as follows. Inhibits all the catalytic activities of DNA gyrase by preventing its interaction with DNA. Acts by binding directly to the C-terminal domain of GyrB, which probably disrupts DNA binding by the gyrase. The polypeptide is DNA gyrase inhibitor YacG (Shewanella baltica (strain OS223)).